We begin with the raw amino-acid sequence, 624 residues long: MACNILNFLTGLLSLSSTLPSTYFPSCIKPSNSHVSQNPVRFEVHLTPGRANPTGAGFRDVILVNGTFTGPTLRLSRGDNVEFLVRNHLREDTAVHFHGITQSLSPWADGTPGIAQRPIRPGAAYLYRWRADESGVFFYHAHSRGQLMDGMYGAIVIERGEDEPSPFHMISHEASDWELMREAEREVQTLMISDWSQFSFGEVMGVEREANIDFTCMDAIVVNGAGSEYCLERELLNEYTNPLVKFILSHTDEKEITDKGCVPPLRLFQGNYSLHLDTLPPEAFRKCIPGVGGGANHTVTVHSSNRWAALTFINPGGLYPLKVTIDNHPMHVFAVDGHYIYPQIVDQILVNNGERYSVFVKLDQEVGRYTIRIANDLLGQVLGGFAALSYNGVMDDPPHPKPLMNYAGGSLVKNIRVFDEFNTRPYPPKPPASVADRTHKFMVRKLAQPHGAYEWTMSGIEGLNMTTEDVASPFLFQDPSQIETSELMLTTKKNEWVDLIIEVEGPFAQSHPMHKHGNKAFIVGRGVGFFPWATVEEAEKHLPRGTFNFIDPPYKDTFKTLEGVNNNAWLALRYHANSPGAWLFHCHIQTHLAGGMGVVILDGVDEWPELPEAYAEWNGFEAPV.

A signal peptide spans 1–18 (MACNILNFLTGLLSLSST). Plastocyanin-like domains are found at residues 48–160 (PGRA…IERG) and 216–373 (CMDA…TIRI). Residue Asn-65 is glycosylated (N-linked (GlcNAc...) asparagine). Cu cation is bound by residues His-96, His-98, His-140, and His-142. N-linked (GlcNAc...) asparagine glycans are attached at residues Asn-271, Asn-296, and Asn-464. The Plastocyanin-like 3 domain occupies 474–603 (FLFQDPSQIE…GGMGVVILDG (130 aa)). Residues His-511, His-514, His-516, His-585, Cys-586, His-587, and His-591 each contribute to the Cu cation site.

The protein belongs to the multicopper oxidase family.

It participates in secondary metabolite biosynthesis. Its function is as follows. Multicopper oxidase; part of the gene cluster that mediates the biosynthesis of elsinochrome C, a perelyenequinone phytotoxin structurally similar to cercosporin. The first step of elsinochrome C biosynthesis is performed by the polyketide synthase elcA which catalyzes the formation of nor-toralactone. The starter unit acyltransferase (SAT) domain of elcA initiates polyketide extension by the selective utilization of acetyl-CoA, which is elongated to the heptaketide in the beta-ketoacyl synthase (KS) domain by successive condensations with six malonyl units introduced by the malonyl acyltransferase (MAT) domain. The product template (PT) domain catalyzes C4-C9 and C2-C11 aldol cyclizations and dehydrations to a trihydroxynaphthalene, which is thought to be delivered to the thioesterase (TE) domain for product release. The bifunctional enzyme elcB then methylates nor-toralactone to toralactone before conducting an unusual oxidative aromatic ring opening. The next step in perylenequinone biosynthesis is an O-methylation at the nascent OH-6 of the elcB product performed by the O-methyltransferase elcD. The oxidative coupling of the two monomeric naphthol units in perylenequinone biosynthesis is catalyzed by the FAD-dependent monooxygenase elcE and the multicopper oxidase elcG. ElcG might catalyze the first intermolecular coupling in a regio- and stereo-selective manner via a phenol radical coupling mechanism and the elcE could forge the second C-C bond intramolecularly via a hydride transfer mechanism. The fasciclin domain-containing protein elcF might also play a role duting this step. The last piece of the puzzle in the biosynthesis of elsinochrome C is the additional annulation by enolate coupling to afford the dihydrobenzo(ghi)perylenequinone system, catalyzed by the FAD-dependent monooxygenase elcH. The chain is Multicopper oxidase elcG from Phaeosphaeria nodorum (strain SN15 / ATCC MYA-4574 / FGSC 10173) (Glume blotch fungus).